Here is a 400-residue protein sequence, read N- to C-terminus: Lysophospholipid transporter LplT (400 aa).

12 helical membrane passes run 19 to 39, 53 to 73, 91 to 111, 139 to 159, 164 to 184, 195 to 213, 227 to 247, 257 to 277, 281 to 301, 304 to 324, 352 to 372, and 373 to 393; these read VIVA…ATLA, VLQM…GQIA, AGAA…LVGI, LMEA…GVLA, IAAL…NLFI, SWRL…VVLW, LFWG…PVAL, YLNA…AKLV, TVSR…IFSL, ALLP…FFVV, NSAM…GVPA, and VAIG…LWIW.

This sequence belongs to the major facilitator superfamily. LplT (TC 2.A.1.42) family.

It is found in the cell inner membrane. Functionally, catalyzes the facilitated diffusion of 2-acyl-glycero-3-phosphoethanolamine (2-acyl-GPE) into the cell. This is Lysophospholipid transporter LplT from Salmonella typhi.